The chain runs to 431 residues: Pyroglutamylated RF-amide peptide receptor (431 aa).

At 1–46 the chain is on the extracellular side; that stretch reads MQALNITPEQFSRLLRDHNLTREQFIALYRLRPLVYTPELPGRAKL. An N-linked (GlcNAc...) asparagine glycan is attached at Asn19. A helical membrane pass occupies residues 47-67; that stretch reads ALVLTGVLIFALALFGNALVF. Topologically, residues 68–81 are cytoplasmic; sequence YVVTRSKAMRTVTN. The chain crosses the membrane as a helical span at residues 82–102; it reads IFICSLALSDLLITFFCIPVT. Residues 103–120 are Extracellular-facing; sequence MLQNISDNWLGGAFICKM. The helical transmembrane segment at 121–141 threads the bilayer; that stretch reads VPFVQSTAVVTEILTMTCIAV. The Cytoplasmic segment spans residues 142 to 162; it reads ERHQGLVHPFKMKWQYTNRRA. Residues 163-183 traverse the membrane as a helical segment; it reads FTMLGVVWLVAVIVGSPMWHV. At 184–212 the chain is on the extracellular side; it reads QQLEIKYDFLYEKEHICCLEEWTSPVHQK. Residues 213–233 form a helical membrane-spanning segment; the sequence is IYTTFILVILFLLPLMVMLIL. Residues 234-271 are Cytoplasmic-facing; the sequence is YSKIGYELWIKKRVGDGSVLRTIHGKEMSKIARKKKRA. The helical transmembrane segment at 272-292 threads the bilayer; it reads VIMMVTVVALFAVCWAPFHVV. The Extracellular portion of the chain corresponds to 293 to 311; the sequence is HMMIEYSNFEKEYDDVTIK. A helical membrane pass occupies residues 312–332; the sequence is MIFAIVQIIGFSNSICNPIVY. Over 333–431 the chain is Cytoplasmic; sequence AFMNENFKKN…AENSPLDSGH (99 aa).

It belongs to the G-protein coupled receptor 1 family. As to expression, expressed widely in the brain with high levels in the hypothalamus, trigeminal ganglia and vestibular neurons, and moderate levels in the amygdala, cortex, pituitary, hippocampus, thalamus, caudate nucleus and medulla oblongata. In peripheral tissues, expressed at high levels in the retina and at moderate levels in the heart, kidney, testis and thyroid.

It is found in the cell membrane. Its function is as follows. Receptor for the orexigenic neuropeptide QRFP. The activity of this receptor is mediated by G proteins that modulate adenylate cyclase activity and intracellular calcium levels. The chain is Pyroglutamylated RF-amide peptide receptor (QRFPR) from Homo sapiens (Human).